Consider the following 333-residue polypeptide: Biotin synthase (333 aa).

One can recognise a Radical SAM core domain in the interval 47–276 (ADIQRASLLS…KARVRLSAGR (230 aa)). Positions 62, 66, and 69 each coordinate [4Fe-4S] cluster. The [2Fe-2S] cluster site is built by C107, C139, C199, and R271.

This sequence belongs to the radical SAM superfamily. Biotin synthase family. In terms of assembly, homodimer. Requires [4Fe-4S] cluster as cofactor. The cofactor is [2Fe-2S] cluster.

The catalysed reaction is (4R,5S)-dethiobiotin + (sulfur carrier)-SH + 2 reduced [2Fe-2S]-[ferredoxin] + 2 S-adenosyl-L-methionine = (sulfur carrier)-H + biotin + 2 5'-deoxyadenosine + 2 L-methionine + 2 oxidized [2Fe-2S]-[ferredoxin]. The protein operates within cofactor biosynthesis; biotin biosynthesis; biotin from 7,8-diaminononanoate: step 2/2. Catalyzes the conversion of dethiobiotin (DTB) to biotin by the insertion of a sulfur atom into dethiobiotin via a radical-based mechanism. The protein is Biotin synthase of Methylobacterium nodulans (strain LMG 21967 / CNCM I-2342 / ORS 2060).